The chain runs to 214 residues: uncharacterized protein (214 aa).

CBS domains follow at residues 7-65 (MDKN…KKPI) and 69-129 (MRPV…EIPV).

This is an uncharacterized protein from Methanocaldococcus jannaschii (strain ATCC 43067 / DSM 2661 / JAL-1 / JCM 10045 / NBRC 100440) (Methanococcus jannaschii).